Consider the following 659-residue polypeptide: Zeaxanthin epoxidase, chloroplastic (659 aa).

A chloroplast-targeting transit peptide spans 1-50 (MALLSATAPAKTRFSLFSHEEAQHPHPHALSACCGGGASGKRQRARARVA). FAD contacts are provided by residues 79–107 (RVLVAGGGIGGLVLALAARRKGYEVTVFE) and 357–370 (TFNWGKGRVTLLGD). An FHA domain is found at 553–607 (LSIGSRSDPSNSTASLALPLPQISENHATITCKNKAFYVTDNGSEHGTWITDNEG).

FAD is required as a cofactor. As to expression, expressed in young microspores.

The protein localises to the plastid. It localises to the chloroplast membrane. It is found in the chloroplast thylakoid membrane. The enzyme catalyses all-trans-zeaxanthin + 4 reduced [2Fe-2S]-[ferredoxin] + 2 O2 + 4 H(+) = all-trans-violaxanthin + 4 oxidized [2Fe-2S]-[ferredoxin] + 2 H2O. The protein operates within plant hormone biosynthesis; abscisate biosynthesis. Functionally, zeaxanthin epoxidase that plays an important role in the xanthophyll cycle and abscisic acid (ABA) biosynthesis. Converts zeaxanthin into antheraxanthin and subsequently violaxanthin. Required for resistance to osmotic and drought stresses, seed development and dormancy. The chain is Zeaxanthin epoxidase, chloroplastic (ZEP) from Oryza sativa subsp. japonica (Rice).